A 745-amino-acid chain; its full sequence is Junction plakoglobin (745 aa).

M1 carries the post-translational modification N-acetylmethionine. T14 carries O-linked (GlcNAc) threonine glycosylation. Phosphoserine is present on residues S99 and S125. 12 ARM repeats span residues 132–171 (NYQD…QLSK), 172–215 (KEAS…LSHH), 216–255 (REGL…NLLL), 258–297 (EGAK…LLAY), 298–341 (GNQE…LSVC), 342–381 (PSNK…NLSD), 383–420 (ATKQ…NLTC), 423–464 (SKNK…HLTS), 470–510 (EMAQ…NLAL), 512–551 (PANH…QPYT), 574–613 (PMNR…ELAQ), and 615–661 (KEAA…PDYR). Residues 132-297 (NYQDDAELAT…TTDCLQLLAY (166 aa)) form an interaction with DSC1 and DSG1 region. Residue S182 is modified to Phosphoserine. The interval 574-661 (PMNRMEIFRL…ISEDKNPDYR (88 aa)) is interaction with DSC1. Residues S665 and S730 each carry the phosphoserine modification.

The protein belongs to the beta-catenin family. In terms of assembly, homodimer. Component of an E-cadherin/catenin adhesion complex composed of at least E-cadherin/CDH1 and gamma-catenin/JUP, and possibly alpha-catenin/CTNNA1; the complex is located to adherens junctions. The stable association of CTNNA1 is controversial as CTNNA1 was shown not to bind to F-actin when assembled in the complex. Interacts with MUC1. Interacts with CAV1. Interacts with PTPRJ. Interacts with DSG1. Interacts with DSC1 and DSC2. Interacts with PKP2. Interacts with PKP3 (via N-terminus); the interaction is required for PKP3 localization to desmosome cell-cell junctions. Interacts with DSG4. May be phosphorylated by FER.

The protein localises to the cell junction. It is found in the adherens junction. The protein resides in the desmosome. It localises to the cytoplasm. Its subcellular location is the cytoskeleton. The protein localises to the cell membrane. It is found in the nucleus. Functionally, common junctional plaque protein. The membrane-associated plaques are architectural elements in an important strategic position to influence the arrangement and function of both the cytoskeleton and the cells within the tissue. The presence of plakoglobin in both the desmosomes and in the intermediate junctions suggests that it plays a central role in the structure and function of submembranous plaques. Acts as a substrate for VE-PTP and is required by it to stimulate VE-cadherin function in endothelial cells. Can replace beta-catenin in E-cadherin/catenin adhesion complexes which are proposed to couple cadherins to the actin cytoskeleton. This chain is Junction plakoglobin, found in Sus scrofa (Pig).